Reading from the N-terminus, the 415-residue chain is MASAEIIAVGTELLLGQIVNSNAAFISQELAADGIYVYHHTVVGDNPERLKEVIKIAENRSDILIFTGGLGPTEDDITKQILADHLNKRLVEDEFHMNKITEYFTSRSRKMTENNKLQAVIIEDSVVLNNDYGFAAGMYLKANKHTYILLPGPPSEMKPMFTSYANPLLVSENGEKIILESKIMRFFGIGESQLAADLNDLILNQVNPTLATYAGDNEVVVRITATASTKEKAAALVKDMEEEILRRDGTFLYGYGEVSLPEHVTAMLLERKMTIAAAESFTAGLFQAEIARFPGISSIFKGGMVTYSEEVKQSMLQVPAEVIEEHGVVSSECAKVMAENVRRLCDTDIGISFTGVAGPDSLEGHPAGTIWIGLSVKGNESEAFQYVYGRDRNHNRRRAVKQGFQLIKHFLETNK.

The protein belongs to the CinA family.

The chain is Putative competence-damage inducible protein from Listeria welshimeri serovar 6b (strain ATCC 35897 / DSM 20650 / CCUG 15529 / CIP 8149 / NCTC 11857 / SLCC 5334 / V8).